Here is a 188-residue protein sequence, read N- to C-terminus: Ribosomal RNA small subunit methyltransferase G (188 aa).

S-adenosyl-L-methionine is bound by residues glycine 69, phenylalanine 74, 119-120, and arginine 134; that span reads VQ.

Belongs to the methyltransferase superfamily. RNA methyltransferase RsmG family.

It is found in the cytoplasm. It carries out the reaction guanosine(527) in 16S rRNA + S-adenosyl-L-methionine = N(7)-methylguanosine(527) in 16S rRNA + S-adenosyl-L-homocysteine. Its function is as follows. Specifically methylates the N7 position of guanine in position 527 of 16S rRNA. The polypeptide is Ribosomal RNA small subunit methyltransferase G (Campylobacter jejuni (strain RM1221)).